We begin with the raw amino-acid sequence, 502 residues long: UPF0371 protein CLJ_B0384 (502 aa).

Belongs to the UPF0371 family.

This Clostridium botulinum (strain 657 / Type Ba4) protein is UPF0371 protein CLJ_B0384.